Consider the following 439-residue polypeptide: UPF0489 protein C5orf22 homolog (439 aa).

Residues 163–219 (TTKLENGQSGAKIPKAAQTQDDMQSKADTPCTSSSQPPDGSAASGNISETAKKKADD) are disordered. Residues 179–211 (AQTQDDMQSKADTPCTSSSQPPDGSAASGNISE) show a composition bias toward polar residues.

Belongs to the UPF0489 family.

This Danio rerio (Zebrafish) protein is UPF0489 protein C5orf22 homolog.